The primary structure comprises 476 residues: Cytosolic iron-sulfur assembly component 3 (476 aa).

A2 bears the N-acetylalanine mark. Residues C24, C71, C74, C77, C190, C246, C395, and C399 each coordinate [4Fe-4S] cluster.

It belongs to the NARF family. In terms of assembly, external component of the CIA complex. In the CIA complex, interacts directly with CIAO1 and MMS19.

Its function is as follows. Component of the cytosolic iron-sulfur protein assembly (CIA) complex, a multiprotein complex that mediates the incorporation of iron-sulfur cluster into extramitochondrial Fe/S proteins. Seems to negatively regulate the level of HIF1A expression, although this effect could be indirect. The chain is Cytosolic iron-sulfur assembly component 3 from Pongo abelii (Sumatran orangutan).